Reading from the N-terminus, the 281-residue chain is Ribosomal protein L11 methyltransferase (281 aa).

4 residues coordinate S-adenosyl-L-methionine: Thr-133, Gly-154, Asp-175, and Asn-216.

The protein belongs to the methyltransferase superfamily. PrmA family.

The protein resides in the cytoplasm. The catalysed reaction is L-lysyl-[protein] + 3 S-adenosyl-L-methionine = N(6),N(6),N(6)-trimethyl-L-lysyl-[protein] + 3 S-adenosyl-L-homocysteine + 3 H(+). Functionally, methylates ribosomal protein L11. The chain is Ribosomal protein L11 methyltransferase from Campylobacter jejuni subsp. jejuni serotype O:2 (strain ATCC 700819 / NCTC 11168).